The primary structure comprises 462 residues: Glycerol-3-phosphate acyltransferase ATS12, chloroplastic (462 aa).

The N-terminal 82 residues, 1–82 (MFILSSSSST…DKESAQSAAT (82 aa)), are a transit peptide targeting the chloroplast. Positions 233-238 (HQTEAD) match the HXXXXD motif motif.

Belongs to the GPAT/DAPAT family.

It is found in the plastid. Its subcellular location is the chloroplast stroma. It carries out the reaction a fatty acyl-[ACP] + sn-glycerol 3-phosphate = a 1-acyl-sn-glycero-3-phosphate + holo-[ACP]. The enzyme catalyses sn-glycerol 3-phosphate + an acyl-CoA = a 1-acyl-sn-glycero-3-phosphate + CoA. It participates in phospholipid metabolism; CDP-diacylglycerol biosynthesis; CDP-diacylglycerol from sn-glycerol 3-phosphate: step 1/3. Functionally, esterifies the acyl-group from acyl-acyl carrier proteins (acyl-ACPs) to the sn-1 position of glycerol-3-phosphate. The physiological acyl donors in chloroplasts are acyl-ACPs, but acyl-CoAs are used as artificial donor for in vitro reactions. The enzyme from chilling-resistant plants discriminates against non-fluid palmitic acid and selects oleic acid whereas the enzyme from sensitive plants accepts both fatty acids. Squash is chilling-sensitive. Does not seem to discriminate between the acyl-ACP thioesters 18:1-ACP, 18:0-ACP and 16:0-ACP. Exhibits higher selectivity for 16:0-CoA than 18:1-CoA in vitro. In Cucurbita moschata (Winter crookneck squash), this protein is Glycerol-3-phosphate acyltransferase ATS12, chloroplastic.